We begin with the raw amino-acid sequence, 356 residues long: Carminomycin 4-O-methyltransferase DauK (356 aa).

An S-adenosyl-L-methionine-binding site is contributed by R153. D163 provides a ligand contact to substrate. Residues G187, E210, D237–F238, and S252 contribute to the S-adenosyl-L-methionine site. Residues N257 and R303 each coordinate substrate.

The protein belongs to the class I-like SAM-binding methyltransferase superfamily. Cation-independent O-methyltransferase family. As to quaternary structure, homodimer and homotetramer in equilibrium.

It carries out the reaction carminomycin + S-adenosyl-L-methionine = daunorubicin + S-adenosyl-L-homocysteine + H(+). It participates in antibiotic biosynthesis; daunorubicin biosynthesis. Its pathway is antibiotic biosynthesis; carminomycin biosynthesis. Strongly inhibited by S-adenosyl-L-homocysteine and weakly by adenine and methionine. Functionally, involved in the biosynthesis of the anthracyclines carminomycin and daunorubicin (daunomycin) which are aromatic polyketide antibiotics that exhibit high cytotoxicity and are widely applied in the chemotherapy of a variety of cancers. In vivo, catalyzes the transfer of a methyl group from S-adenosyl-L-methionine to the 4-O-position of carminomycin to form daunorubicin. In vitro, it also methylates the anthracyclines rhodomycin D (10-carbomethoxy-13-deoxycarminomycin), 10-carboxy-13-deoxycarminomycin, 13-deoxy-carminomycin and 13-dihydrocarminomycin at the 4-hydroxyl position. The protein is Carminomycin 4-O-methyltransferase DauK (dauK) of Streptomyces sp. (strain C5).